Here is a 171-residue protein sequence, read N- to C-terminus: S-ribosylhomocysteine lyase (171 aa).

3 residues coordinate Fe cation: H54, H58, and C128.

It belongs to the LuxS family. As to quaternary structure, homodimer. Fe cation serves as cofactor.

It catalyses the reaction S-(5-deoxy-D-ribos-5-yl)-L-homocysteine = (S)-4,5-dihydroxypentane-2,3-dione + L-homocysteine. Involved in the synthesis of autoinducer 2 (AI-2) which is secreted by bacteria and is used to communicate both the cell density and the metabolic potential of the environment. The regulation of gene expression in response to changes in cell density is called quorum sensing. Catalyzes the transformation of S-ribosylhomocysteine (RHC) to homocysteine (HC) and 4,5-dihydroxy-2,3-pentadione (DPD). The sequence is that of S-ribosylhomocysteine lyase from Citrobacter koseri (strain ATCC BAA-895 / CDC 4225-83 / SGSC4696).